A 142-amino-acid chain; its full sequence is Lysozyme 2 (142 aa).

An N-terminal signal peptide occupies residues 1 to 20 (MLKLTLTILAAVLLVTPAFG). In terms of domain architecture, C-type lysozyme spans 21–142 (KVYTRCSLAR…HTLPSIDDCF (122 aa)). 4 disulfides stabilise this stretch: Cys-26-Cys-141, Cys-47-Cys-131, Cys-82-Cys-98, and Cys-94-Cys-112. The active site involves Glu-52. N-linked (GlcNAc...) asparagine glycosylation occurs at Asn-66. Asp-70 is an active-site residue.

It belongs to the glycosyl hydrolase 22 family. In terms of tissue distribution, expressed only in the midgut where it is concentrated around the middle in all larval stages.

Its subcellular location is the secreted. The enzyme catalyses Hydrolysis of (1-&gt;4)-beta-linkages between N-acetylmuramic acid and N-acetyl-D-glucosamine residues in a peptidoglycan and between N-acetyl-D-glucosamine residues in chitodextrins.. Functionally, lysozymes have primarily a bacteriolytic function. Shows antibacterial activity against Gram-positive bacterium M.luteus but shows no activity against Gram-negative bacterium E.coli. Likely to play a role in the eradication of ingested pathogens during their passage through the intestine. The sequence is that of Lysozyme 2 from Lucilia sericata (Green bottle fly).